The chain runs to 480 residues: uncharacterized protein (480 aa).

Residues 131–207 form the PUA domain; it reads KKIIKIKNDV…KVVKVRFFIK (77 aa).

In the C-terminal section; belongs to the PAPS reductase family.

This is an uncharacterized protein from Methanocaldococcus jannaschii (strain ATCC 43067 / DSM 2661 / JAL-1 / JCM 10045 / NBRC 100440) (Methanococcus jannaschii).